A 513-amino-acid chain; its full sequence is Histidine ammonia-lyase (513 aa).

The 5-imidazolinone (Ala-Gly) cross-link spans 146 to 148; sequence ASG. The residue at position 147 (Ser147) is a 2,3-didehydroalanine (Ser).

The protein belongs to the PAL/histidase family. Contains an active site 4-methylidene-imidazol-5-one (MIO), which is formed autocatalytically by cyclization and dehydration of residues Ala-Ser-Gly.

The protein localises to the cytoplasm. The catalysed reaction is L-histidine = trans-urocanate + NH4(+). The protein operates within amino-acid degradation; L-histidine degradation into L-glutamate; N-formimidoyl-L-glutamate from L-histidine: step 1/3. The protein is Histidine ammonia-lyase of Shewanella oneidensis (strain ATCC 700550 / JCM 31522 / CIP 106686 / LMG 19005 / NCIMB 14063 / MR-1).